Consider the following 1959-residue polypeptide: Myosin-9 (1959 aa).

The 51-residue stretch at 27 to 77 folds into the Myosin N-terminal SH3-like domain; that stretch reads AAKKLVWVPSEKSGFEAASLKEEVGDEAIVELAENGKKVKVNKDDIQKMNP. Residues 81–776 enclose the Myosin motor domain; that stretch reads SKVEDMAELT…VLAHLEEERD (696 aa). ATP is bound at residue 174–181; it reads GESGAGKT. Positions 654–676 are actin-binding; that stretch reads LAKLMATLRNTNPNFVRCIIPNH. Residues 779-808 form the IQ domain; it reads ITDVIIGFQACCRGYLARKAFAKRQQQLTA. The stretch at 837–1925 forms a coiled coil; the sequence is LLQVSRQEEE…LKSKLRRGDL (1089 aa). Disordered regions lie at residues 1118–1168, 1694–1717, 1879–1917, and 1936–1959; these read EDLE…REQE, RAKRQAQQERDELADEIANSSGKG, LEEAEEEAQRANVRRKLQRELDDATETADAMNREVSSLK, and KGTGECSDEEVDGKAEAGDAKATE. Composition is skewed to basic and acidic residues over residues 1122 to 1148 and 1694 to 1704; these read SERASRNKAEKQKRDLGEELEALKTEL and RAKRQAQQERD. Over residues 1947-1959 the composition is skewed to basic and acidic residues; it reads DGKAEAGDAKATE.

The protein belongs to the TRAFAC class myosin-kinesin ATPase superfamily. Myosin family. In terms of assembly, myosin is a hexameric protein that consists of 2 heavy chain subunits (MHC), 2 alkali light chain subunits (MLC) and 2 regulatory light chain subunits (MLC-2). In terms of tissue distribution, expressed in fibroblasts, brain, lung, kidney, spleen, and skeletal, cardiac and smooth muscles.

It is found in the cytoplasm. The protein localises to the cytoskeleton. It localises to the cell cortex. The protein resides in the cytoplasmic vesicle. Its subcellular location is the secretory vesicle. It is found in the cortical granule. Its function is as follows. Cellular myosin that appears to play a role in cytokinesis, cell shape, and specialized functions such as secretion and capping. The polypeptide is Myosin-9 (MYH9) (Gallus gallus (Chicken)).